Reading from the N-terminus, the 307-residue chain is Streptomycin 6-kinase (307 aa).

133–145 (LAGLLARLVSVPA) serves as a coordination point for streptomycin. The active-site Proton acceptor is D201.

It belongs to the aminoglycoside phosphotransferase family.

The enzyme catalyses streptomycin + ATP = streptomycin 6-phosphate + ADP + H(+). Functionally, the aminoglycoside phosphotransferases achieve inactivation of their antibiotic substrates by phosphorylation. This Streptomyces glaucescens protein is Streptomycin 6-kinase (sph).